We begin with the raw amino-acid sequence, 208 residues long: Uracil phosphoribosyltransferase (208 aa).

5-phospho-alpha-D-ribose 1-diphosphate-binding positions include Arg-78, Arg-103, and 130–138 (DPMLATGGS). Residues Ile-193 and 198-200 (GDA) contribute to the uracil site. Asp-199 lines the 5-phospho-alpha-D-ribose 1-diphosphate pocket.

This sequence belongs to the UPRTase family. The cofactor is Mg(2+).

The catalysed reaction is UMP + diphosphate = 5-phospho-alpha-D-ribose 1-diphosphate + uracil. The protein operates within pyrimidine metabolism; UMP biosynthesis via salvage pathway; UMP from uracil: step 1/1. Its activity is regulated as follows. Allosterically activated by GTP. In terms of biological role, catalyzes the conversion of uracil and 5-phospho-alpha-D-ribose 1-diphosphate (PRPP) to UMP and diphosphate. The sequence is that of Uracil phosphoribosyltransferase from Escherichia fergusonii (strain ATCC 35469 / DSM 13698 / CCUG 18766 / IAM 14443 / JCM 21226 / LMG 7866 / NBRC 102419 / NCTC 12128 / CDC 0568-73).